We begin with the raw amino-acid sequence, 492 residues long: Aerolysin (492 aa).

The first 21 residues, 1–21 (MKALKITGLSLIISATLAAQT), serve as a signal peptide directing secretion. 2 disulfides stabilise this stretch: cysteine 42–cysteine 98 and cysteine 182–cysteine 187. Residues 68–84 (WQISGLANNWVILGPGY) are interaction with host N-linked glycan. Residues 256-288 (YGLSEKVSTKNKFKWPLVGETEVSIEIAANQSW) are part of the transmembrane beta-barrel after proteolytic activation of the toxin and insertion into the host membrane. Positions 346 to 355 (RWGGNAWHTH) are interaction with glycans from host GPI-anchor. Residues 446-492 (GSDSKVRRTRSVDGANTGLKLDIPLDAQELAELGFENVTLSVTPARN) constitute a propeptide that is removed on maturation.

This sequence belongs to the aerolysin family. As to quaternary structure, homodimer in solution; homoheptamer in the host membrane. After binding to GPI-anchored proteins in target membranes and proteolytic removal of the C-terminal propeptide, the protein assembles into a heptameric pre-pore complex. A further conformation change leads to insertion into the host membrane. Proteolytic cleavage and subsequent release of the propeptide trigger a major conformation change, leading to the formation of a heptameric pre-pore that then inserts into the host membrane.

Its subcellular location is the secreted. It localises to the host cell membrane. Its function is as follows. Secreted, cytolytic toxin that forms pores in host membranes after proteolytic removal of a C-terminal propeptide, leading to destruction of the membrane permeability barrier and cell death. The pores are formed by transmembrane beta-strands and are approximately 3 nm in diameter. In Aeromonas enteropelogenes (Aeromonas trota), this protein is Aerolysin (aerA).